A 498-amino-acid chain; its full sequence is Inosine-5'-monophosphate dehydrogenase (498 aa).

CBS domains follow at residues 98–155 (MVVN…EQKI) and 159–216 (MTRE…PHAS). NAD(+)-binding positions include aspartate 253 and 303–305 (GIG). The K(+) site is built by glycine 305 and glycine 307. Serine 308 is an IMP binding site. Residue cysteine 310 participates in K(+) binding. Residue cysteine 310 is the Thioimidate intermediate of the active site. Residues 343-345 (DGG), 366-367 (GS), and 390-394 (YRGMG) each bind IMP. Arginine 406 serves as the catalytic Proton acceptor. Position 421 (glutamate 421) interacts with IMP. 3 residues coordinate K(+): glutamate 475, serine 476, and histidine 477.

This sequence belongs to the IMPDH/GMPR family. In terms of assembly, homotetramer. It depends on K(+) as a cofactor.

The catalysed reaction is IMP + NAD(+) + H2O = XMP + NADH + H(+). It functions in the pathway purine metabolism; XMP biosynthesis via de novo pathway; XMP from IMP: step 1/1. Its activity is regulated as follows. Mycophenolic acid (MPA) is a non-competitive inhibitor that prevents formation of the closed enzyme conformation by binding to the same site as the amobile flap. In contrast, mizoribine monophosphate (MZP) is a competitive inhibitor that induces the closed conformation. MPA is a potent inhibitor of mammalian IMPDHs but a poor inhibitor of the bacterial enzymes. MZP is a more potent inhibitor of bacterial IMPDH. Functionally, catalyzes the conversion of inosine 5'-phosphate (IMP) to xanthosine 5'-phosphate (XMP), the first committed and rate-limiting step in the de novo synthesis of guanine nucleotides, and therefore plays an important role in the regulation of cell growth. The chain is Inosine-5'-monophosphate dehydrogenase from Rhizobium tropici.